A 189-amino-acid chain; its full sequence is Lipid A acyltransferase PagP (189 aa).

An N-terminal signal peptide occupies residues 1–23 (MRLKLILYFLILSCYLGIGSARA). Active-site residues include histidine 61, aspartate 104, and serine 105.

The protein belongs to the lipid A palmitoyltransferase family. As to quaternary structure, homodimer.

It localises to the cell outer membrane. The catalysed reaction is a lipid A + a 1,2-diacyl-sn-glycero-3-phosphocholine = a hepta-acyl lipid A + a 2-acyl-sn-glycero-3-phosphocholine. It catalyses the reaction a lipid IVA + a 1,2-diacyl-sn-glycero-3-phosphocholine = a lipid IVB + a 2-acyl-sn-glycero-3-phosphocholine. The enzyme catalyses a lipid IIA + a 1,2-diacyl-sn-glycero-3-phosphocholine = a lipid IIB + a 2-acyl-sn-glycero-3-phosphocholine. Transfers a fatty acid residue from the sn-1 position of a phospholipid to the N-linked hydroxyfatty acid chain on the proximal unit of lipid A or its precursors. The sequence is that of Lipid A acyltransferase PagP from Erwinia tasmaniensis (strain DSM 17950 / CFBP 7177 / CIP 109463 / NCPPB 4357 / Et1/99).